The sequence spans 836 residues: Eukaryotic translation initiation factor 3 subunit C (836 aa).

The interval 1–97 (MSRFFVSGYD…RRVVKSAKEK (97 aa)) is disordered. Acidic residues predominate over residues 13–55 (SSSEEEDLLTSSEEELMSSEQESDSEFDDEFANDDDSDSSDSD). Positions 86–97 (EGRRVVKSAKEK) are enriched in basic and acidic residues. Residues 586-761 (FHMHINLELL…KSINFVSSEH (176 aa)) form the PCI domain. A disordered region spans residues 783 to 817 (DKNEKTASNGHGRKTTQQQQQQQQKEQREQTHDEN). Residues 797–806 (TTQQQQQQQQ) show a composition bias toward low complexity. A compositionally biased stretch (basic and acidic residues) spans 807–817 (KEQREQTHDEN).

It belongs to the eIF-3 subunit C family. In terms of assembly, component of the eukaryotic translation initiation factor 3 (eIF-3) complex.

It localises to the cytoplasm. Component of the eukaryotic translation initiation factor 3 (eIF-3) complex, which is involved in protein synthesis of a specialized repertoire of mRNAs and, together with other initiation factors, stimulates binding of mRNA and methionyl-tRNAi to the 40S ribosome. The eIF-3 complex specifically targets and initiates translation of a subset of mRNAs involved in cell proliferation. This chain is Eukaryotic translation initiation factor 3 subunit C, found in Meyerozyma guilliermondii (strain ATCC 6260 / CBS 566 / DSM 6381 / JCM 1539 / NBRC 10279 / NRRL Y-324) (Yeast).